The chain runs to 303 residues: Nucleotide-binding protein Acry_0446 (303 aa).

10–17 (GLSGAGRN) contacts ATP. 54 to 57 (DART) contributes to the GTP binding site.

The protein belongs to the RapZ-like family.

Displays ATPase and GTPase activities. This Acidiphilium cryptum (strain JF-5) protein is Nucleotide-binding protein Acry_0446.